Here is a 274-residue protein sequence, read N- to C-terminus: Bis(5'-nucleosyl)-tetraphosphatase, symmetrical (274 aa).

Belongs to the Ap4A hydrolase family.

The enzyme catalyses P(1),P(4)-bis(5'-adenosyl) tetraphosphate + H2O = 2 ADP + 2 H(+). Hydrolyzes diadenosine 5',5'''-P1,P4-tetraphosphate to yield ADP. This is Bis(5'-nucleosyl)-tetraphosphatase, symmetrical from Shewanella putrefaciens (strain CN-32 / ATCC BAA-453).